A 704-amino-acid chain; its full sequence is DNA ligase (704 aa).

Residues 43-47 (DADYD), 92-93 (SL), and Glu-124 contribute to the NAD(+) site. Catalysis depends on Lys-126, which acts as the N6-AMP-lysine intermediate. NAD(+) contacts are provided by Arg-147, Glu-182, Lys-298, and Lys-322. Residues Cys-427, Cys-430, Cys-445, and Cys-451 each contribute to the Zn(2+) site. Residues 625–704 (PVASPVAGKI…DGWLRLIGDA (80 aa)) form the BRCT domain.

It belongs to the NAD-dependent DNA ligase family. LigA subfamily. The cofactor is Mg(2+). It depends on Mn(2+) as a cofactor.

It catalyses the reaction NAD(+) + (deoxyribonucleotide)n-3'-hydroxyl + 5'-phospho-(deoxyribonucleotide)m = (deoxyribonucleotide)n+m + AMP + beta-nicotinamide D-nucleotide.. Functionally, DNA ligase that catalyzes the formation of phosphodiester linkages between 5'-phosphoryl and 3'-hydroxyl groups in double-stranded DNA using NAD as a coenzyme and as the energy source for the reaction. It is essential for DNA replication and repair of damaged DNA. The chain is DNA ligase from Cereibacter sphaeroides (strain ATCC 17023 / DSM 158 / JCM 6121 / CCUG 31486 / LMG 2827 / NBRC 12203 / NCIMB 8253 / ATH 2.4.1.) (Rhodobacter sphaeroides).